The primary structure comprises 2092 residues: Nonribosomal peptide synthetase echPS (2092 aa).

The segment at 13–406 (FSQRCCQNPD…GRRDRVTKIR (394 aa)) is adenylation 1. Residues 524-600 (SGPLTIGQAI…SLIEKSRHET (77 aa)) form the Carrier 1 domain. Ser561 is modified (O-(pantetheine 4'-phosphoryl)serine). The disordered stretch occupies residues 596 to 626 (SRHETEDTPDSSAFATRTPEESSMPTQGPVT). Residues 605–624 (DSSAFATRTPEESSMPTQGP) show a composition bias toward polar residues. Residues 624–1017 (PVTPLQKRMV…YTSLLDAFLD (394 aa)) are condensation 1. Residues 1068-1446 (ASLYPTHVAV…GRKDRQVKVR (379 aa)) form an adenylation 2 region. Residues 1544–1622 (IKTTHLEKLI…DLVILVAQQQ (79 aa)) enclose the Carrier 2 domain. An O-(pantetheine 4'-phosphoryl)serine modification is found at Ser1582. The tract at residues 1663–2047 (SQSQSTFNVS…EALLLECFRI (385 aa)) is condensation 2.

This sequence belongs to the NRP synthetase family. The cofactor is pantetheine 4'-phosphate.

The enzyme catalyses L-tryptophan + L-alanine + 2 ATP = cyclo(L-tryptophyl-L-alanyl) + 2 ADP + 2 phosphate + 2 H(+). Its pathway is secondary metabolite biosynthesis. It participates in alkaloid biosynthesis. Nonribosomal peptide synthetase; part of the gene cluster that mediates the biosynthesis of echinulin family alkaloid. The pathway begins with the biosynthesis of the cyclic dipeptide cyclo-L-Trp-L-Ala (cyclo-TA) by the NRPS echPS via condensation of L-alanine and L-tryptophan. The prenyltransferase echPT1 then catalyzes the first prenylation step, a reverse prenylation reaction at C2, to yield preechinulin. Preechinulin is the substrate of the cytochrome P450 monooxygenase echP450 that catalyzes the formation of the double bond between C10 and C11 to produce neoechulin A. The unique prenyltransferase echPT2 functions as a competitive enzyme with echP450 for preechinulin metabolization and uses preechinulin for effective regiospecific prenylations. Preechinulin is prenylated by echPT2 at C5 or C7. C7-prenylation leads to accumulation of tardioxopiperazine B without further modification by echPT2. In contrast, the C5-prenylated tardioxopiperazine A can be prenylated again by echPT2, predominantly at C7 to form echinulin or less frequently at C4 to give variecolorin L. EchPT2 also accepts neoechilunin A to produce varlecolorin G (prenylation at C5) or isoechinulin A (prenylation at C7). EchPT2 further converts isoechinulin A into dehydroechinulin. Moreover, a yet unidentified enzyme can also convert neoechilunin A into neoechilunin B by introducing a double bond between positions C14 and C17 and thus provides a further substrate to echPT2 for C5 and C7 prenylation. The sequence is that of Nonribosomal peptide synthetase echPS from Aspergillus ruber (strain CBS 135680).